The chain runs to 74 residues: Invertase 3 (74 aa).

A signal peptide spans 1–19 (MLLQAFIFLLAGFAAKISA). A glycan (N-linked (GlcNAc...) asparagine) is linked at Asn-23. Residues 39–42 (WMND) and Gln-60 each bind substrate. The active site involves Asp-42. A glycan (N-linked (GlcNAc...) asparagine) is linked at Asn-64.

This sequence belongs to the glycosyl hydrolase 32 family.

The enzyme catalyses Hydrolysis of terminal non-reducing beta-D-fructofuranoside residues in beta-D-fructofuranosides.. The sequence is that of Invertase 3 (SUC3) from Saccharomyces cerevisiae (Baker's yeast).